A 373-amino-acid chain; its full sequence is MFPRRPPATLAAWLAGARGGGLLSALANQCRFVTGLRVRRAQQIAQLYGRLYSESSRCALLGRFWRRLRGRPGHASVLMAALSGVFVWDEERIQEEELQRSINEMKRLEEMSNIFQSSGVENYPPEPKSPAGGNEKSKDKEEPWEMVMDKKHFKLWRRPITGTHLYQYRVFGTYTDVTPRQFFNVQLDTEYRKKWDALVIKLEVIERDAVSGSEVLHWVTHFPYPMYSRDYVYVRRYSVDQENNVMVLVSRAVEHPSVPESPEFVRVRSYESQMVIRPHKSFDENGFDYLLTYSDNPQTVFPRYCVSWMVSSGMPDFLEKLHMATLKAKNMEIKVKDYISAKPLEMSSEAKATAPSPERKNEGSCGPARIEYA.

A mitochondrion-targeting transit peptide spans 1-61; it reads MFPRRPPATL…YSESSRCALL (61 aa). Residues 89–114 adopt a coiled-coil conformation; sequence DEERIQEEELQRSINEMKRLEEMSNI. An START domain is found at 115–330; the sequence is FQSSGVENYP…LHMATLKAKN (216 aa). 2 disordered regions span residues 118 to 141 and 347 to 373; these read SGVE…KDKE and SSEA…IEYA.

Post-translationally, proteolytically cleaved by PARL. Expressed in epithelial cells of airways, peripheral bronchioles and alveoli, as well as in the basal cell layer of the epidermis (at protein level).

The protein resides in the mitochondrion. In terms of biological role, may play a protective role in mucosal tissues by preventing exaggerated allergic responses. This Mus musculus (Mouse) protein is StAR-related lipid transfer protein 7, mitochondrial (Stard7).